The sequence spans 215 residues: Sodium channel regulatory subunit beta-2 (215 aa).

Residues 1 to 29 form the signal peptide; the sequence is MHRDAWLPRPAFSLTGLSLFFSLVPPGRS. Topologically, residues 30 to 157 are extracellular; the sequence is MEVTVPATLN…XEEPPERDST (128 aa). The 123-residue stretch at 32-154 folds into the Ig-like C2-type domain; sequence VTVPATLNVL…QVLXEEPPER (123 aa). Residues asparagine 42, asparagine 66, and asparagine 74 are each glycosylated (N-linked (GlcNAc...) asparagine). Intrachain disulfides connect cysteine 50/cysteine 127 and cysteine 72/cysteine 75. The helical transmembrane segment at 158 to 179 threads the bilayer; the sequence is VAVIVGASVGGFLAVVILVLMV. At 180–215 the chain is on the cytoplasmic side; that stretch reads VKCVRRKKEQKLSTDDLKTEEEGKTDGEGNPDDGAK. The segment at 187 to 215 is disordered; sequence KEQKLSTDDLKTEEEGKTDGEGNPDDGAK. A compositionally biased stretch (basic and acidic residues) spans 189–215; sequence QKLSTDDLKTEEEGKTDGEGNPDDGAK. A Phosphoserine modification is found at serine 192. Position 204 is a phosphothreonine (threonine 204).

The protein belongs to the sodium channel auxiliary subunit SCN2B (TC 8.A.17) family. In terms of assembly, a voltage-gated sodium (Nav) channel consists of an ion-conducting pore-forming alpha subunit functional on its own that is regulated by one or more beta subunits. The beta subunit SCN2B is disulfide-linked to the pore-forming alpha subunit. Interacts with SCN1A; regulatory subunit of SCN1A/Nav1.1. Interacts with SCN2A; regulatory subunit of SCN2A/Nav1.2. Interacts with SCN3A; regulatory subunit of SCN3A/Nav1.3. Interacts with SCN5A; regulatory subunit of SCN5A/Nav1.5. Interacts with SCN8A; regulatory subunit of SCN8A/Nav1.6. Interacts with SCN9A; regulatory subunit of SCN9A/Nav1.7. Interacts with SCN10A; regulatory subunit of SCN10A/Nav1.8. Interacts with TNR; may play a crucial role in clustering and regulation of activity of SCN2B-containing Nav channels at nodes of Ranvier.

It is found in the cell membrane. It localises to the cell projection. The protein localises to the axon. In terms of biological role, regulatory subunit of multiple voltage-gated sodium (Nav) channels, that directly mediate the depolarization of excitable membranes. Navs, also called VGSCs (voltage-gated sodium channels) or VDSCs (voltage-dependent sodium channels), operate by switching between closed and open conformations depending on the voltage difference across the membrane. In the open conformation they allow Na(+) ions to selectively pass through the pore, along their electrochemical gradient. The influx of Na+ ions provokes membrane depolarization, initiating the propagation of electrical signals throughout cells and tissues. The accessory beta subunits participate in localization and functional modulation of the Nav channels. Modulates the activity of SCN1A/Nav1.1, SCN2A/Nav1.2, SCN2A/Nav1.3, SCN5A/Nav1.5, SCN8A/Nav1.6, SCN9A/Nav1.7 and SCN10A/Nav1.8. This chain is Sodium channel regulatory subunit beta-2, found in Canis lupus familiaris (Dog).